Reading from the N-terminus, the 644-residue chain is Exoribonuclease 2 (644 aa).

Positions 189–516 (RQDLTALNFV…NHRLLKAVIK (328 aa)) constitute an RNB domain. Residues 561-643 (NTRFAAEIID…ETRSIIARPA (83 aa)) form the S1 motif domain.

This sequence belongs to the RNR ribonuclease family. RNase II subfamily.

The protein localises to the cytoplasm. It carries out the reaction Exonucleolytic cleavage in the 3'- to 5'-direction to yield nucleoside 5'-phosphates.. Involved in mRNA degradation. Hydrolyzes single-stranded polyribonucleotides processively in the 3' to 5' direction. The protein is Exoribonuclease 2 of Salmonella paratyphi B (strain ATCC BAA-1250 / SPB7).